The chain runs to 141 residues: Probable spanin, inner membrane subunit (141 aa).

A helical; Signal-anchor for type II membrane protein transmembrane segment spans residues 1-17 (MSRLMIVLVVLLSLAVA). Topologically, residues 18–141 (GLFLVKHKNA…ESEPLPDAGQ (124 aa)) are periplasmic. The segment at 119–141 (ACTDASDCPQRMPESEPLPDAGQ) is disordered.

Interacts (via C-terminus) with the spanin outer lipoprotein subunit (via C-terminus). Part of the spanin complex which spans the entire periplasmic space. The spanin complex is composed of spanin inner membrane subunit and spanin outer membrane subunit.

Its subcellular location is the host cell inner membrane. Functionally, component of the spanin complex that disrupts the host outer membrane and participates in cell lysis during virus exit. The spanin complex conducts the final step in host lysis by disrupting the outer membrane after holin and endolysin action have permeabilized the inner membrane and degraded the host peptidoglycans. Host outer membrane disruption is possibly due to local fusion between the inner and outer membrane performed by the spanin complex. In Escherichia phage P2 (Bacteriophage P2), this protein is Probable spanin, inner membrane subunit (lysB).